Here is a 443-residue protein sequence, read N- to C-terminus: Ribulose bisphosphate carboxylase large chain (443 aa).

The substrate site is built by asparagine 89 and threonine 139. Catalysis depends on lysine 141, which acts as the Proton acceptor. Lysine 143 is a substrate binding site. Mg(2+) is bound by residues lysine 167, aspartate 169, and glutamate 170. An N6-carboxylysine modification is found at lysine 167. Histidine 260 acts as the Proton acceptor in catalysis. Substrate contacts are provided by arginine 261, histidine 293, and serine 345.

It belongs to the RuBisCO large chain family. Type I subfamily. In terms of assembly, heterohexadecamer of 8 large chains and 8 small chains; disulfide-linked. The disulfide link is formed within the large subunit homodimers. The cofactor is Mg(2+). In terms of processing, the disulfide bond which can form in the large chain dimeric partners within the hexadecamer appears to be associated with oxidative stress and protein turnover.

Its subcellular location is the plastid. The protein localises to the chloroplast. The catalysed reaction is 2 (2R)-3-phosphoglycerate + 2 H(+) = D-ribulose 1,5-bisphosphate + CO2 + H2O. It carries out the reaction D-ribulose 1,5-bisphosphate + O2 = 2-phosphoglycolate + (2R)-3-phosphoglycerate + 2 H(+). Functionally, ruBisCO catalyzes two reactions: the carboxylation of D-ribulose 1,5-bisphosphate, the primary event in carbon dioxide fixation, as well as the oxidative fragmentation of the pentose substrate in the photorespiration process. Both reactions occur simultaneously and in competition at the same active site. The protein is Ribulose bisphosphate carboxylase large chain of Villarsia calthifolia (Marsh flower).